The following is a 260-amino-acid chain: Phosphatidate cytidylyltransferase (260 aa).

Transmembrane regions (helical) follow at residues 9-29, 46-66, 70-90, 102-122, 130-150, 172-192, and 196-216; these read IIALLIFLPILLKGGLILMLF, MIKFLSIPGLISALALIIIML, AGEWVQVIQLKGLIAMSFIVL, FMDAAFCLMSVAYVGIGFMYF, LRYILFAFLIVWLTDTGAYIF, FFGGILCSILVPLVMQMFVDL, and IWLLLLVTIVLSMFGQLGDLV.

It belongs to the CDS family.

Its subcellular location is the cell membrane. The enzyme catalyses a 1,2-diacyl-sn-glycero-3-phosphate + CTP + H(+) = a CDP-1,2-diacyl-sn-glycerol + diphosphate. The protein operates within phospholipid metabolism; CDP-diacylglycerol biosynthesis; CDP-diacylglycerol from sn-glycerol 3-phosphate: step 3/3. This chain is Phosphatidate cytidylyltransferase (cdsA), found in Staphylococcus epidermidis (strain ATCC 35984 / DSM 28319 / BCRC 17069 / CCUG 31568 / BM 3577 / RP62A).